The following is a 365-amino-acid chain: DNA polymerase IV (365 aa).

Residues 14–198 enclose the UmuC domain; that stretch reads IIHIDMDAFF…LPIEKFHGVG (185 aa). The Mg(2+) site is built by Asp18 and Asp116. Residue Glu117 is part of the active site.

It belongs to the DNA polymerase type-Y family. As to quaternary structure, monomer. The cofactor is Mg(2+).

The protein resides in the cytoplasm. It catalyses the reaction DNA(n) + a 2'-deoxyribonucleoside 5'-triphosphate = DNA(n+1) + diphosphate. In terms of biological role, poorly processive, error-prone DNA polymerase involved in untargeted mutagenesis. Copies undamaged DNA at stalled replication forks, which arise in vivo from mismatched or misaligned primer ends. These misaligned primers can be extended by PolIV. Exhibits no 3'-5' exonuclease (proofreading) activity. May be involved in translesional synthesis, in conjunction with the beta clamp from PolIII. This is DNA polymerase IV from Streptococcus pyogenes serotype M3 (strain ATCC BAA-595 / MGAS315).